Here is a 461-residue protein sequence, read N- to C-terminus: tRNA modification GTPase MnmE (461 aa).

(6S)-5-formyl-5,6,7,8-tetrahydrofolate-binding residues include Arg27, Glu89, and Arg128. The 159-residue stretch at 224 to 382 (GLATAIVGRP…LENAIEKLFF (159 aa)) folds into the TrmE-type G domain. Asn234 lines the K(+) pocket. Residues 234–239 (NVGKSS), 253–259 (TDIAGTT), and 278–281 (DTAG) each bind GTP. Ser238 provides a ligand contact to Mg(2+). Residues Thr253, Ile255, and Thr258 each coordinate K(+). Position 259 (Thr259) interacts with Mg(2+). Lys461 lines the (6S)-5-formyl-5,6,7,8-tetrahydrofolate pocket.

The protein belongs to the TRAFAC class TrmE-Era-EngA-EngB-Septin-like GTPase superfamily. TrmE GTPase family. As to quaternary structure, homodimer. Heterotetramer of two MnmE and two MnmG subunits. It depends on K(+) as a cofactor.

It localises to the cytoplasm. Functionally, exhibits a very high intrinsic GTPase hydrolysis rate. Involved in the addition of a carboxymethylaminomethyl (cmnm) group at the wobble position (U34) of certain tRNAs, forming tRNA-cmnm(5)s(2)U34. This is tRNA modification GTPase MnmE from Lactobacillus gasseri (strain ATCC 33323 / DSM 20243 / BCRC 14619 / CIP 102991 / JCM 1131 / KCTC 3163 / NCIMB 11718 / NCTC 13722 / AM63).